Here is a 315-residue protein sequence, read N- to C-terminus: MEYRVTEILTFAEPDLLNERQSWLATLAGERRLADNTVEAYERDTRQFLRFLTGYIGRPAAIRDIADLRPVDLRAFLANRRKEGAGARSLGRHLAGLRSLLHHLQKKGLVNAAGATAMRAPKQPKSLPKPLTDRQALKITTAEAQLNEEPWIAARNAAVLSLLYGCGLRISEALGLTPADFPPGTRSLRITGKGNKTRIVPLLAVVTEAVDTYRKLCPYALAADEPMFLGARGGKLQPAIIQREMQKLRGAFGLPENATPHALRHSFATHLLAGGGDLRTIQELLGHASLSTTQVYTGVDTARLLEIYDNAHPRA.

Residues 14-105 (PDLLNERQSW…GLRSLLHHLQ (92 aa)) form the Core-binding (CB) domain. Residues 126 to 309 (SLPKPLTDRQ…DTARLLEIYD (184 aa)) form the Tyr recombinase domain. Catalysis depends on residues arginine 169, lysine 193, histidine 261, arginine 264, and histidine 287. Tyrosine 296 (O-(3'-phospho-DNA)-tyrosine intermediate) is an active-site residue.

It belongs to the 'phage' integrase family. XerC subfamily. As to quaternary structure, forms a cyclic heterotetrameric complex composed of two molecules of XerC and two molecules of XerD.

The protein localises to the cytoplasm. In terms of biological role, site-specific tyrosine recombinase, which acts by catalyzing the cutting and rejoining of the recombining DNA molecules. The XerC-XerD complex is essential to convert dimers of the bacterial chromosome into monomers to permit their segregation at cell division. It also contributes to the segregational stability of plasmids. The polypeptide is Tyrosine recombinase XerC (Agrobacterium fabrum (strain C58 / ATCC 33970) (Agrobacterium tumefaciens (strain C58))).